The primary structure comprises 121 residues: Fluoride-specific ion channel FluC 2 (121 aa).

4 consecutive transmembrane segments (helical) span residues 3–23, 31–51, 64–84, and 92–112; these read YLFI…LSFI, IGTF…GTLA, GITT…FELV, and FILL…LCFL. Na(+) is bound by residues Gly71 and Thr74.

The protein belongs to the fluoride channel Fluc/FEX (TC 1.A.43) family.

It localises to the cell membrane. It carries out the reaction fluoride(in) = fluoride(out). With respect to regulation, na(+) is not transported, but it plays an essential structural role and its presence is essential for fluoride channel function. In terms of biological role, fluoride-specific ion channel. Important for reducing fluoride concentration in the cell, thus reducing its toxicity. The sequence is that of Fluoride-specific ion channel FluC 2 from Staphylococcus saprophyticus subsp. saprophyticus (strain ATCC 15305 / DSM 20229 / NCIMB 8711 / NCTC 7292 / S-41).